Reading from the N-terminus, the 59-residue chain is Lantipeptide Flvbeta.f (59 aa).

Positions 1–27 (MEKMNNIAGITPENELDEMFDDSVVGA) are cleaved as a propeptide — cleaved by FlvT. 2,3-didehydrobutyrine; by FlvM2 is present on residues T31 and T32. 2 cross-links (beta-methyllanthionine (Thr-Cys); by FlvM2) span residues 41–47 (TKNPQIC) and 53–56 (TVKC).

Contains DL-beta-methyllanthionine, when coepressed in E.coli with the flavecin synthetase FlvM2.

Its subcellular location is the secreted. Its function is as follows. Lanthionine-containing peptide that does probably not show antibacterial activity, since its analog [+7]Flvbeta.f does not show antibacterial activity against M.luteus. Also does not show antibiotic activity when tested with [Del2]Flvalpha.a, an analog of Flvalpha.a, which is encoded by the same operon than Flvbeta.f. The bactericidal activity of lantibiotics is based on depolarization of energized bacterial cytoplasmic membranes, initiated by the formation of aqueous transmembrane pores. This is Lantipeptide Flvbeta.f from Ruminococcus flavefaciens.